Consider the following 240-residue polypeptide: MCSLEKRDRLFILKLTGDGEHRLNPTLLDSLRSTINQIRSDPSFSQSVLITTSDGKFFSNGYDLALAESNPSLSVVMDAKLRSLVADLISLPMPTIAAVTGHASAAGCILAMSHDYVLMRRDRGFLYMSELDIELIVPAWFMAVIRGKIGSPAARRDVMLTAAKVTADVGVKMGIVDSAYGSAAETVEAAIKLGEEIVQRGGDGHVYGKMRESLLREVLIHTIGEYESGSSVVRSTGSKL.

A Microbody targeting signal motif is present at residues 238 to 240 (SKL).

Belongs to the enoyl-CoA hydratase/isomerase family.

The protein resides in the peroxisome. It carries out the reaction a (3Z)-enoyl-CoA = a 4-saturated (2E)-enoyl-CoA. It catalyses the reaction a (3E)-enoyl-CoA = a 4-saturated (2E)-enoyl-CoA. It participates in lipid metabolism; fatty acid beta-oxidation. In terms of biological role, able to isomerize both 3-cis and 3-trans double bonds into the 2-trans form in a range of enoyl-CoA species. Essential for the beta oxidation of unsaturated fatty acids. This Arabidopsis thaliana (Mouse-ear cress) protein is Enoyl-CoA delta isomerase 1, peroxisomal.